We begin with the raw amino-acid sequence, 393 residues long: MVLLSILRILLWGLVLFMEHRVQMTQVGQPSIAHLPEAPTLPLIQELLEEAPGKQQRKPRVLGHPLRYMLELYQRSADASGHPRENRTIGATMVRLVRPLASVARPLRGSWHIQTLDFPLRPNRVAYQLVRATVVYRHQLHLTHSHLSCHVEPWVQKSPTNHFPSSGRGSSKPSLLPKTWTEMDIMEHVGQKLWNHKGRRVLRLRFVCQQPRGSEVLEFWWHGTSSLDTVFLLLYFNDTQSVQKTKPLPKGLKEFTEKDPSLLLRRARQAGSIASEVPGPSREHDGPESNQCSLHPFQVSFQQLGWDHWIIAPHLYTPNYCKGVCPRVLHYGLNSPNHAIIQNLVSELVDQNVPQPSCVPYKYVPISILLIEANGSILYKEYEGMIAQSCTCR.

The N-terminal stretch at 1 to 25 (MVLLSILRILLWGLVLFMEHRVQMT) is a signal peptide. Positions 26–268 (QVGQPSIAHL…DPSLLLRRAR (243 aa)) are excised as a propeptide. 2 N-linked (GlcNAc...) asparagine glycosylation sites follow: Asn86 and Asn237. Cystine bridges form between Cys292–Cys358, Cys321–Cys390, and Cys325–Cys392. Residue Asn374 is glycosylated (N-linked (GlcNAc...) asparagine).

Belongs to the TGF-beta family. As to quaternary structure, homodimer. But, in contrast to other members of this family, cannot be disulfide-linked.

It localises to the secreted. May be involved in follicular development. Oocyte-specific growth/differentiation factor that stimulates folliculogenesis and granulosa cell (GC) growth. The protein is Bone morphogenetic protein 15 (BMP15) of Ovis aries (Sheep).